The sequence spans 373 residues: Alanine racemase (373 aa).

Residue K35 is the Proton acceptor; specific for D-alanine of the active site. Residue K35 is modified to N6-(pyridoxal phosphate)lysine. R130 is a substrate binding site. Residue Y253 is the Proton acceptor; specific for L-alanine of the active site. M305 serves as a coordination point for substrate.

This sequence belongs to the alanine racemase family. Pyridoxal 5'-phosphate serves as cofactor.

The catalysed reaction is L-alanine = D-alanine. It functions in the pathway amino-acid biosynthesis; D-alanine biosynthesis; D-alanine from L-alanine: step 1/1. Functionally, catalyzes the interconversion of L-alanine and D-alanine. May also act on other amino acids. The protein is Alanine racemase (alr) of Cupriavidus necator (strain ATCC 17699 / DSM 428 / KCTC 22496 / NCIMB 10442 / H16 / Stanier 337) (Ralstonia eutropha).